The primary structure comprises 380 residues: Cytochrome b (380 aa).

4 helical membrane passes run 34-54 (FGSL…LLAA), 78-99 (WLIR…YLHI), 114-134 (WNTG…GYVL), and 179-199 (FFAL…IHLA). Residues H84 and H98 each coordinate heme b. Heme b contacts are provided by H183 and H197. H202 is a binding site for a ubiquinone. The next 4 helical transmembrane spans lie at 227–247 (LKDI…ALFS), 289–309 (LGGV…PLLH), 321–341 (LSQL…WIGS), and 348–368 (FIII…ILFP).

Belongs to the cytochrome b family. In terms of assembly, the cytochrome bc1 complex contains 11 subunits: 3 respiratory subunits (MT-CYB, CYC1 and UQCRFS1), 2 core proteins (UQCRC1 and UQCRC2) and 6 low-molecular weight proteins (UQCRH/QCR6, UQCRB/QCR7, UQCRQ/QCR8, UQCR10/QCR9, UQCR11/QCR10 and a cleavage product of UQCRFS1). This cytochrome bc1 complex then forms a dimer. The cofactor is heme b.

It is found in the mitochondrion inner membrane. Component of the ubiquinol-cytochrome c reductase complex (complex III or cytochrome b-c1 complex) that is part of the mitochondrial respiratory chain. The b-c1 complex mediates electron transfer from ubiquinol to cytochrome c. Contributes to the generation of a proton gradient across the mitochondrial membrane that is then used for ATP synthesis. This Cyrtonyx montezumae (Montezuma quail) protein is Cytochrome b (MT-CYB).